A 245-amino-acid polypeptide reads, in one-letter code: MDYSSMHQNVMGVSSCSTQDYQNQKKPLSATRPAPPEQSLRCPRCDSTNTKFCYYNNYSLSQPRYFCKSCRRYWTKGGILRNIPIGGAYRKHKRSSSATKSLRTTPEPTMTHDGKSFPTASFGYNNNNISNEQMELGLAYALLNKQPLGVSSHLGFGSSQSPMAMDGVYGTTSHQMENTGYAFGNGGGGMEQMATSDPNRVLWGFPWQMNMGGGSGHGHGHVDQIDSGREIWSSTVNYINTGALL.

Residues 15–26 (SCSTQDYQNQKK) are compositionally biased toward polar residues. The disordered stretch occupies residues 15-41 (SCSTQDYQNQKKPLSATRPAPPEQSLR). The Dof-type zinc-finger motif lies at 40–94 (LRCPRCDSTNTKFCYYNNYSLSQPRYFCKSCRRYWTKGGILRNIPIGGAYRKHKR). Positions 42, 45, 67, and 70 each coordinate Zn(2+). The tract at residues 91-118 (KHKRSSSATKSLRTTPEPTMTHDGKSFP) is disordered. The segment covering 96–108 (SSATKSLRTTPEP) has biased composition (polar residues).

As to quaternary structure, interacts with TCP14. In terms of tissue distribution, the PEAR proteins (e.g. DOF2.4, DOF5.1, DOF3.2, DOF1.1, DOF5.6 and DOF5.3) form a short-range concentration gradient that peaks at protophloem sieve elements (PSE).

The protein resides in the nucleus. Transcription factor that negatively affects seed germination and opposes TCP14 function in the regulation of a specific set of abscisic acid-related genes. The PEAR proteins (e.g. DOF2.4, DOF5.1, DOF3.2, DOF1.1, DOF5.6 and DOF5.3) activate gene expression that promotes radial growth of protophloem sieve elements. This is Dof zinc finger protein DOF3.2 from Arabidopsis thaliana (Mouse-ear cress).